A 261-amino-acid chain; its full sequence is MTTREDGRADDELRTVKITRGFTSHPAGSVLVEFGNTRVMCTASVEEGVPRWRKGSGLGWLTAEYAMLPAATHTRSGRESVKGKVGGRTQEISRLIGRSLRACIDLAAIGENTIALDCDVLQADGGTRTAAVTGAYVALVDAVTYLRAADLLSDPQPISCGIAAVSVGVVDGRVRLDLPYEEDSRAEVDMNVVATDTGTLVEIQGTGEGATFPRSTLDKLLDSALAGCEQLFEIQRQALAEPYPGVLPEPKNPEPKKKFGA.

Residues Arg-88 and 126-128 (GTR) each bind phosphate. Residues 242 to 261 (PYPGVLPEPKNPEPKKKFGA) are disordered. Basic and acidic residues predominate over residues 251–261 (KNPEPKKKFGA).

The protein belongs to the RNase PH family. Homohexameric ring arranged as a trimer of dimers.

The enzyme catalyses tRNA(n+1) + phosphate = tRNA(n) + a ribonucleoside 5'-diphosphate. Phosphorolytic 3'-5' exoribonuclease that plays an important role in tRNA 3'-end maturation. Removes nucleotide residues following the 3'-CCA terminus of tRNAs; can also add nucleotides to the ends of RNA molecules by using nucleoside diphosphates as substrates, but this may not be physiologically important. Probably plays a role in initiation of 16S rRNA degradation (leading to ribosome degradation) during starvation. The chain is Ribonuclease PH from Rhodococcus erythropolis (strain PR4 / NBRC 100887).